The chain runs to 450 residues: Phosphoglucosamine mutase (450 aa).

Catalysis depends on Ser104, which acts as the Phosphoserine intermediate. Mg(2+) is bound by residues Ser104, Asp243, Asp245, and Asp247. A Phosphoserine modification is found at Ser104.

This sequence belongs to the phosphohexose mutase family. Mg(2+) is required as a cofactor. Post-translationally, activated by phosphorylation.

It carries out the reaction alpha-D-glucosamine 1-phosphate = D-glucosamine 6-phosphate. Catalyzes the conversion of glucosamine-6-phosphate to glucosamine-1-phosphate. The polypeptide is Phosphoglucosamine mutase (Cutibacterium acnes (strain DSM 16379 / KPA171202) (Propionibacterium acnes)).